We begin with the raw amino-acid sequence, 115 residues long: NADH-ubiquinone oxidoreductase chain 3 (115 aa).

Helical transmembrane passes span 3–23, 55–75, and 84–104; these read FVLI…ITFW, FFLV…LLPL, and LPLM…SLAY.

Belongs to the complex I subunit 3 family. In terms of assembly, core subunit of respiratory chain NADH dehydrogenase (Complex I) which is composed of 45 different subunits. Interacts with TMEM186. Interacts with TMEM242.

The protein localises to the mitochondrion inner membrane. The catalysed reaction is a ubiquinone + NADH + 5 H(+)(in) = a ubiquinol + NAD(+) + 4 H(+)(out). Core subunit of the mitochondrial membrane respiratory chain NADH dehydrogenase (Complex I) which catalyzes electron transfer from NADH through the respiratory chain, using ubiquinone as an electron acceptor. Essential for the catalytic activity of complex I. The protein is NADH-ubiquinone oxidoreductase chain 3 of Pan troglodytes (Chimpanzee).